The sequence spans 544 residues: Glucans biosynthesis protein G 1 (544 aa).

A signal peptide spans 1–33; the sequence is MVSLLRCQSFKPSSIICSLALSAAFALSGTAFA. A disordered region spans residues 36-58; sequence SKPAENKPATPVVSPPKATAPSA.

It belongs to the OpgD/OpgG family.

Its subcellular location is the periplasm. Its pathway is glycan metabolism; osmoregulated periplasmic glucan (OPG) biosynthesis. In terms of biological role, involved in the biosynthesis of osmoregulated periplasmic glucans (OPGs). The chain is Glucans biosynthesis protein G 1 (opgG1) from Shewanella oneidensis (strain ATCC 700550 / JCM 31522 / CIP 106686 / LMG 19005 / NCIMB 14063 / MR-1).